The following is a 743-amino-acid chain: Dynein regulatory complex protein 1 homolog (743 aa).

Acidic residues-rich tracts occupy residues 1–10 (MDDNEDELEE) and 19–28 (SVEEEEEVEP). Positions 1 to 34 (MDDNEDELEEHQELVSDGSVEEEEEVEPDLGPVD) are disordered. Coiled coils occupy residues 175–332 (DQIE…VLMN) and 395–416 (KLHS…NNRE). Residues 599-620 (NRLQGAAGGQPDEKEHRSTGDT) form a disordered region. Residues 715–742 (KMRVQYDAEVVFLRRQNEELRHLLQKFT) adopt a coiled-coil conformation.

It belongs to the DRC1 family.

This is Dynein regulatory complex protein 1 homolog from Drosophila melanogaster (Fruit fly).